Here is a 137-residue protein sequence, read N- to C-terminus: Large ribosomal subunit protein uL16 (137 aa).

A compositionally biased stretch (basic residues) spans 1 to 17 (MLQPKRTKFRKQQKGRN). Residues 1–24 (MLQPKRTKFRKQQKGRNRGLAQSG) form a disordered region.

This sequence belongs to the universal ribosomal protein uL16 family. Part of the 50S ribosomal subunit.

Its function is as follows. Binds 23S rRNA and is also seen to make contacts with the A and possibly P site tRNAs. This is Large ribosomal subunit protein uL16 from Dichelobacter nodosus (strain VCS1703A).